Here is a 550-residue protein sequence, read N- to C-terminus: Hydroxylamine reductase (550 aa).

[2Fe-2S] cluster is bound by residues Cys-3, Cys-6, Cys-18, and Cys-25. Hybrid [4Fe-2O-2S] cluster-binding residues include His-249, Glu-273, Cys-317, Cys-405, Cys-433, Cys-458, Glu-492, and Lys-494. A Cysteine persulfide modification is found at Cys-405.

This sequence belongs to the HCP family. [2Fe-2S] cluster serves as cofactor. It depends on hybrid [4Fe-2O-2S] cluster as a cofactor.

The protein localises to the cytoplasm. The catalysed reaction is A + NH4(+) + H2O = hydroxylamine + AH2 + H(+). In terms of biological role, catalyzes the reduction of hydroxylamine to form NH(3) and H(2)O. The polypeptide is Hydroxylamine reductase (Salmonella gallinarum (strain 287/91 / NCTC 13346)).